We begin with the raw amino-acid sequence, 513 residues long: Ribonuclease Y (513 aa).

Residues 6-26 (YIIIAVVIIIICVILGLYIVD) traverse the membrane as a helical segment. In terms of domain architecture, KH spans 203–288 (TVHVVNLPND…EMVEKAKKEV (86 aa)). An HD domain is found at 329-422 (VLKHSIEVSH…VQAADAISAA (94 aa)).

It belongs to the RNase Y family.

It is found in the cell membrane. Functionally, endoribonuclease that initiates mRNA decay. The protein is Ribonuclease Y of Clostridium botulinum (strain ATCC 19397 / Type A).